The following is a 211-amino-acid chain: N,O-diacetylmuramidase (211 aa).

Catalysis depends on residues aspartate 6 and glutamate 100. Cysteine 108 and cysteine 147 are oxidised to a cystine.

Belongs to the glycosyl hydrolase 25 family.

The protein localises to the secreted. The protein resides in the extracellular space. It carries out the reaction Hydrolysis of (1-&gt;4)-beta-linkages between N-acetylmuramic acid and N-acetyl-D-glucosamine residues in a peptidoglycan and between N-acetyl-D-glucosamine residues in chitodextrins.. In terms of biological role, this enzyme has both lysozyme (acetylmuramidase) and diacetylmuramidase activities. The chain is N,O-diacetylmuramidase from Chalaropsis sp.